We begin with the raw amino-acid sequence, 346 residues long: Ribonucleoside-diphosphate reductase subunit beta (346 aa).

Fe cation-binding residues include E89, E120, and H123. Residue Y129 is part of the active site. Fe cation contacts are provided by E193, E227, and H230.

It belongs to the ribonucleoside diphosphate reductase small chain family. As to quaternary structure, tetramer of two alpha and two beta subunits. The cofactor is Fe cation.

The catalysed reaction is a 2'-deoxyribonucleoside 5'-diphosphate + [thioredoxin]-disulfide + H2O = a ribonucleoside 5'-diphosphate + [thioredoxin]-dithiol. Provides the precursors necessary for DNA synthesis. Catalyzes the biosynthesis of deoxyribonucleotides from the corresponding ribonucleotides. The sequence is that of Ribonucleoside-diphosphate reductase subunit beta (nrdB) from Chlamydia muridarum (strain MoPn / Nigg).